The primary structure comprises 219 residues: Glycosylphosphatidylinositol anchor biosynthesis protein 11 (219 aa).

Topologically, residues 1 to 45 are cytoplasmic; the sequence is MPAKKRTRKTVKKTVSFSDDTTLTTHQNREKKNVDHDRPPVYVRK. Position 16 is a phosphoserine (S16). The helical transmembrane segment at 46–66 threads the bilayer; that stretch reads TPLMTFPYHLVALLYYYVFVS. A topological domain (lumenal) is located at residue S67. A helical membrane pass occupies residues 68–88; the sequence is NFNTVKLLSFLIPTQVAYLVL. The Cytoplasmic portion of the chain corresponds to 89–108; the sequence is QFNKCTVYGNKIIKINYSLT. Residues 109–129 form a helical membrane-spanning segment; it reads IICLGVTFLLSFPTMLLTILF. Over 130–135 the chain is Lumenal; that stretch reads GAPLMD. Residues 136–156 traverse the membrane as a helical segment; that stretch reads LLWETWLLSLHFAFLAYPAVY. Residues 157-170 lie on the Cytoplasmic side of the membrane; the sequence is SVFNCDFKVGLWKK. The helical transmembrane segment at 171–191 threads the bilayer; the sequence is YFIFIVVGGWISCVVIPLDWD. Topologically, residues 192 to 198 are lumenal; the sequence is RDWQNWP. The helical transmembrane segment at 199–217 threads the bilayer; sequence IPIVVGGYLGALVGYTIGA. Over 218–219 the chain is Cytoplasmic; that stretch reads YI.

The protein belongs to the PIGF family.

It is found in the endoplasmic reticulum membrane. It participates in glycolipid biosynthesis; glycosylphosphatidylinositol-anchor biosynthesis. In terms of biological role, acts in the GPI biosynthetic pathway between GlcNAc-PI synthesis and GPI transfer to protein. Required for the formation of complete GPI precursors CP1 and CP2. The protein is Glycosylphosphatidylinositol anchor biosynthesis protein 11 (GPI11) of Saccharomyces cerevisiae (strain ATCC 204508 / S288c) (Baker's yeast).